Consider the following 324-residue polypeptide: Acetyl-coenzyme A carboxylase carboxyl transferase subunit beta (324 aa).

A CoA carboxyltransferase N-terminal domain is found at 28-297 (LWCKCPSCNA…AVAPAAAKAP (270 aa)). C32, C35, C51, and C54 together coordinate Zn(2+). The C4-type zinc-finger motif lies at 32–54 (CPSCNAILYKSEVERNLEVCPKC).

It belongs to the AccD/PCCB family. As to quaternary structure, acetyl-CoA carboxylase is a heterohexamer composed of biotin carboxyl carrier protein (AccB), biotin carboxylase (AccC) and two subunits each of ACCase subunit alpha (AccA) and ACCase subunit beta (AccD). Zn(2+) serves as cofactor.

It is found in the cytoplasm. It carries out the reaction N(6)-carboxybiotinyl-L-lysyl-[protein] + acetyl-CoA = N(6)-biotinyl-L-lysyl-[protein] + malonyl-CoA. The protein operates within lipid metabolism; malonyl-CoA biosynthesis; malonyl-CoA from acetyl-CoA: step 1/1. Component of the acetyl coenzyme A carboxylase (ACC) complex. Biotin carboxylase (BC) catalyzes the carboxylation of biotin on its carrier protein (BCCP) and then the CO(2) group is transferred by the transcarboxylase to acetyl-CoA to form malonyl-CoA. This is Acetyl-coenzyme A carboxylase carboxyl transferase subunit beta from Methylococcus capsulatus (strain ATCC 33009 / NCIMB 11132 / Bath).